A 167-amino-acid chain; its full sequence is Envelope glycoprotein L (167 aa).

Positions 1–20 are cleaved as a signal peptide; it reads MGIFALFAVLWTTLLVTSHA. The tract at residues 18-131 is interaction with gH; the sequence is SHAYVALPCC…ADSSIHNVNI (114 aa). The segment covering 142-154 has biased composition (polar residues); sequence RTGSVSGSQTRAK. The disordered stretch occupies residues 142 to 167; it reads RTGSVSGSQTRAKSSSRRAHAGQKGK. A compositionally biased stretch (basic residues) spans 155–167; that stretch reads SSSRRAHAGQKGK.

The protein belongs to the herpesviridae glycoprotein L family. In terms of assembly, interacts with glycoprotein H (gH); this interaction is necessary for the correct processing and cell surface expression of gH. The heterodimer gH/gL seems to interact with gB trimers during fusion. When in complex with gH, interacts with host EPHA2; this interaction triggers EPHA2 phosphorylation and endocytosis, allowing virus entry.

It is found in the virion membrane. The protein resides in the host cell membrane. The protein localises to the host Golgi apparatus. Its subcellular location is the host trans-Golgi network. Functionally, the heterodimer glycoprotein H-glycoprotein L is required for the fusion of viral and plasma membranes leading to virus entry into the host cell. Acts as a functional inhibitor of gH and maintains gH in an inhibited form. Upon binding to host integrins, gL dissociates from gH leading to activation of the viral fusion glycoproteins gB and gH. Targets heparan sulfate proteoglycans of the syndecan family as well as host EPHA2 to promote viral entry. In Human herpesvirus 8 type P (isolate GK18) (HHV-8), this protein is Envelope glycoprotein L.